Consider the following 308-residue polypeptide: MSAQKSGLHPRNRHQHRYDLAALCQTTPELTSFLIRTPAGEQSVDFANPQAVKALNKALLAHFYAVTHWDIPPGFLCPPVPGRADYIHHLADLLGETTGSIPAQATILDVGVGANCIYPLIGVHEYGWRFTGSEVSDAAMSSAQAIIQANTGLSRAIRLRRQKDPAAIFTGIIHKNEFYDATLCNPPFHDSAAAARAGSERKRRNLGQNKDDALNFGGQQQELWCEGGEVAFIKKMIAESQSFRRQVLWFTTLVSRGENLPPLYRALTEAGAVKVVKKEMAQGQKQSRFIAWTFMDDDQRRRFITRKR.

It belongs to the methyltransferase superfamily. METTL16/RlmF family.

The protein localises to the cytoplasm. The enzyme catalyses adenosine(1618) in 23S rRNA + S-adenosyl-L-methionine = N(6)-methyladenosine(1618) in 23S rRNA + S-adenosyl-L-homocysteine + H(+). Specifically methylates the adenine in position 1618 of 23S rRNA. The polypeptide is Ribosomal RNA large subunit methyltransferase F (Salmonella schwarzengrund (strain CVM19633)).